Here is a 381-residue protein sequence, read N- to C-terminus: L-lactate dehydrogenase A-like 6B (381 aa).

NAD(+) contacts are provided by residues 101 to 106 and arginine 148; that span reads DVDEGR. Substrate is bound by residues arginine 155, asparagine 187, and arginine 218. Asparagine 187 lines the NAD(+) pocket. Histidine 242 functions as the Proton acceptor in the catalytic mechanism. Residue threonine 297 participates in substrate binding.

This sequence belongs to the LDH/MDH superfamily. LDH family.

It carries out the reaction (S)-lactate + NAD(+) = pyruvate + NADH + H(+). Its pathway is fermentation; pyruvate fermentation to lactate; (S)-lactate from pyruvate: step 1/1. The polypeptide is L-lactate dehydrogenase A-like 6B (LDHAL6B) (Bos taurus (Bovine)).